A 289-amino-acid polypeptide reads, in one-letter code: Paired box protein 5 homolog (289 aa).

Positions 29–155 (SHTGVNQLGG…SSINRIVRNK (127 aa)) form a DNA-binding region, paired. A PAI subdomain region spans residues 32–88 (GVNQLGGVFVNGRPLADTVRAQIVEMSQHGTRPCDISRQLKVSHGCVSKILGRYYST). An RED subdomain region spans residues 107 to 155 (RVVECIAGYKRANPTMFAWEIRQKLIEDQICGEENVPSVSSINRIVRNK). Low complexity-rich tracts occupy residues 166–179 (SVTS…SATS) and 189–198 (VQQHMQQSTS). The tract at residues 166–198 (SVTSSAARPSSATSHHQRSPPRGVQQHMQQSTS) is disordered.

It is found in the nucleus. It localises to the chromosome. In terms of biological role, transcription factor. Binds to specific DNA sequence motifs in regulatory elements, for example in the genes encoding transcription factor lin-48, apoptosis regulator ced-9 and neuropeptide-like protein nlp-2. Specifies cell fate, playing an essential role in embryonic and larval development. Involved in morphogenesis of the vulva and uterus in hermaphrodites and of the rectal epithelium of the tail in males. Plays multiple roles in the development of the egg-laying system, acting in both lin-3/EGF-pathway-dependent and -independent processes. Positively regulates expression of neuropeptide-like proteins nlp-2 and nlp-7 in uvl cells in an EGF-pathway-dependent manner. Involved in negatively modulating apoptosis in germline and somatic cells, acting in partial redundancy with transcription factor pax-2, probably by directly regulating transcription of ced-9. Positively regulates transcription of lin-48 in hindgut cells and functions in the development of the hindgut. This Caenorhabditis elegans protein is Paired box protein 5 homolog.